Here is a 1299-residue protein sequence, read N- to C-terminus: Phosphoribosylformylglycinamidine synthase (1299 aa).

Residues 310–321 (GAATGAGGEIRD), 389–391 (TGY), and Ala680 each bind ATP. Positions 681, 720, 724, and 888 each coordinate Mg(2+). ATP is bound at residue Ser890. One can recognise a Glutamine amidotransferase type-1 domain in the interval 1046-1299 (VAVLREQGVN…MFRNARVWLG (254 aa)). The active-site Nucleophile is the Cys1139. Active-site residues include His1264 and Glu1266.

The protein in the N-terminal section; belongs to the FGAMS family. As to quaternary structure, monomer.

The protein resides in the cytoplasm. The enzyme catalyses N(2)-formyl-N(1)-(5-phospho-beta-D-ribosyl)glycinamide + L-glutamine + ATP + H2O = 2-formamido-N(1)-(5-O-phospho-beta-D-ribosyl)acetamidine + L-glutamate + ADP + phosphate + H(+). Its pathway is purine metabolism; IMP biosynthesis via de novo pathway; 5-amino-1-(5-phospho-D-ribosyl)imidazole from N(2)-formyl-N(1)-(5-phospho-D-ribosyl)glycinamide: step 1/2. In terms of biological role, phosphoribosylformylglycinamidine synthase involved in the purines biosynthetic pathway. Catalyzes the ATP-dependent conversion of formylglycinamide ribonucleotide (FGAR) and glutamine to yield formylglycinamidine ribonucleotide (FGAM) and glutamate. The protein is Phosphoribosylformylglycinamidine synthase of Myxococcus xanthus (strain DK1622).